A 340-amino-acid chain; its full sequence is Glyceraldehyde-3-phosphate dehydrogenase (340 aa).

NAD(+)-binding positions include Thr11–Ile12 and Gly109. Cys123 and Cys149 are joined by a disulfide. A D-glyceraldehyde 3-phosphate-binding site is contributed by Ser138 to Asn140. Cys139 serves as the catalytic Nucleophile. Arg167 is an NAD(+) binding site. His193 to Ala194 contributes to the D-glyceraldehyde 3-phosphate binding site. NAD(+) is bound at residue Gln300.

Belongs to the glyceraldehyde-3-phosphate dehydrogenase family. As to quaternary structure, homotetramer.

The protein resides in the cytoplasm. The catalysed reaction is D-glyceraldehyde 3-phosphate + phosphate + NADP(+) = (2R)-3-phospho-glyceroyl phosphate + NADPH + H(+). It carries out the reaction D-glyceraldehyde 3-phosphate + phosphate + NAD(+) = (2R)-3-phospho-glyceroyl phosphate + NADH + H(+). Its pathway is carbohydrate degradation; glycolysis; pyruvate from D-glyceraldehyde 3-phosphate: step 1/5. In terms of biological role, can use both NAD and NADP as cofactors, but exhibits a marked preference for NADP. In Saccharolobus solfataricus (strain ATCC 35092 / DSM 1617 / JCM 11322 / P2) (Sulfolobus solfataricus), this protein is Glyceraldehyde-3-phosphate dehydrogenase (gap).